The following is a 178-amino-acid chain: ATP synthase subunit delta (178 aa).

Belongs to the ATPase delta chain family. As to quaternary structure, F-type ATPases have 2 components, F(1) - the catalytic core - and F(0) - the membrane proton channel. F(1) has five subunits: alpha(3), beta(3), gamma(1), delta(1), epsilon(1). F(0) has three main subunits: a(1), b(2) and c(10-14). The alpha and beta chains form an alternating ring which encloses part of the gamma chain. F(1) is attached to F(0) by a central stalk formed by the gamma and epsilon chains, while a peripheral stalk is formed by the delta and b chains.

The protein resides in the cell inner membrane. F(1)F(0) ATP synthase produces ATP from ADP in the presence of a proton or sodium gradient. F-type ATPases consist of two structural domains, F(1) containing the extramembraneous catalytic core and F(0) containing the membrane proton channel, linked together by a central stalk and a peripheral stalk. During catalysis, ATP synthesis in the catalytic domain of F(1) is coupled via a rotary mechanism of the central stalk subunits to proton translocation. Functionally, this protein is part of the stalk that links CF(0) to CF(1). It either transmits conformational changes from CF(0) to CF(1) or is implicated in proton conduction. The sequence is that of ATP synthase subunit delta from Pseudomonas fluorescens (strain ATCC BAA-477 / NRRL B-23932 / Pf-5).